A 62-amino-acid polypeptide reads, in one-letter code: uncharacterized protein (62 aa).

Residues 1–19 (MKLIILLFVVAAFVTLAMG) form the signal peptide.

This is an uncharacterized protein from Lepidoptera (butterflies and moths).